The primary structure comprises 388 residues: MFDEIRPTRVEVNLDSIVHNFREIKRVVGDRVKVMGVVKANAYGHGAYHVAKALVENGVDYLAVATVEEALELRSYGITAPVLILGYTPLSQAGEAVEKDVTFTAFDLKYVKELGEIASRKGKKAKIHVKIDTGMGRIGYTDFDLAEREIEEMSKLEGIELEGIFSHFATSDEKDKDYAREQFERFADMLKRLEKRGVNITLKHIANSGAITDLNYAYLDMVRPGITLYGSYPSNDVNKILDLRPAMNFKTKIVYIKEVPENTSISYGRTFITKRPSKIATLPIGYADGLNRLLSNNHEVLVRGKYVPIVGRVCMDQTMIDVTEVEGVEVGDEVVIFGEQEGKRITADDIAKKLRTIPHEVYCGISRRVPRIYIYRGEVFDVKNYLKI.

Residue lysine 39 is the Proton acceptor; specific for D-alanine of the active site. The residue at position 39 (lysine 39) is an N6-(pyridoxal phosphate)lysine. Substrate is bound at residue arginine 137. Catalysis depends on tyrosine 267, which acts as the Proton acceptor; specific for L-alanine. Substrate is bound at residue methionine 315.

Belongs to the alanine racemase family. It depends on pyridoxal 5'-phosphate as a cofactor.

It carries out the reaction L-alanine = D-alanine. The protein operates within amino-acid biosynthesis; D-alanine biosynthesis; D-alanine from L-alanine: step 1/1. Its function is as follows. Catalyzes the interconversion of L-alanine and D-alanine. May also act on other amino acids. The sequence is that of Alanine racemase 2 (alr2) from Caldanaerobacter subterraneus subsp. tengcongensis (strain DSM 15242 / JCM 11007 / NBRC 100824 / MB4) (Thermoanaerobacter tengcongensis).